The primary structure comprises 670 residues: Solute carrier organic anion transporter family member 1A3 (670 aa).

Topologically, residues 1–20 (MGDLEKGAATHGAGCFAKIK) are cytoplasmic. A helical membrane pass occupies residues 21-40 (VFLMALTCAYVSKSLSGTFM). The Extracellular segment spans residues 41-59 (SSMLTQIERQFGIPTAIVG). The chain crosses the membrane as a helical span at residues 60–80 (FINGSFEIGNLLLIIFVSYFG). At 81 to 86 (MKLHRP) the chain is on the cytoplasmic side. Residues 87–111 (IVIGVGCAVMGLGCFIISLPHFLMG) traverse the membrane as a helical segment. Residues 112 to 155 (RYEYETTILPTSNLSSNSFLCMENQTQTLNPAQDPAECVKEVKS) are Extracellular-facing. 2 N-linked (GlcNAc...) asparagine glycosylation sites follow: Asn-124 and Asn-135. The helical transmembrane segment at 156 to 184 (LMWIYVLVGNIIRGIGETPIMPLGVSYIE) threads the bilayer. The Cytoplasmic portion of the chain corresponds to 185-203 (NFAKSENSPLYIGILETGK). The helical transmembrane segment at 204–224 (MIGPIFGLLLGSFCASIYVDT) threads the bilayer. At 225–242 (GSVNTDDLTITPTDIRWV) the chain is on the extracellular side. The chain crosses the membrane as a helical span at residues 243 to 267 (GAWWIGFLVCAGVNILISIPFFFFP). At 268 to 311 (KTLPKEGLQENVDGTENAKEESTEKRPRKKNRGITKDFFPFLKS) the chain is on the cytoplasmic side. Positions 277–296 (ENVDGTENAKEESTEKRPRK) are disordered. The segment covering 283–292 (ENAKEESTEK) has biased composition (basic and acidic residues). The helical transmembrane segment at 312 to 333 (PVLQPDLHAVHPYKVLQVNAFN) threads the bilayer. Topologically, residues 334–353 (IYFSFLPKYLENQYGKSTAE) are extracellular. The helical transmembrane segment at 354–377 (VIFLMGVYNLPAICIGYLIAGFMM) threads the bilayer. Over 378-381 (KKFK) the chain is Cytoplasmic. A helical membrane pass occupies residues 382–405 (ITVKTAAFLAFCLSLSEYSFGFCN). The Extracellular segment spans residues 406-513 (FLITCDNVPV…PECTNKLQYL (108 aa)). Residues 433-488 (NNVLADCNTRCSCLTKTWDPVCGDNGLAYMSACLAGCEKSVGTGTNMVFHNCSCIQ) enclose the Kazal-like domain. 3 cysteine pairs are disulfide-bonded: Cys-439–Cys-469, Cys-445–Cys-465, and Cys-454–Cys-486. N-linked (GlcNAc...) asparagine glycosylation is found at Asn-483 and Asn-492. The helical transmembrane segment at 514–536 (LILSGFLSILYSFAAIPGYMVFL) threads the bilayer. Residues 537-545 (RCIKSEEKS) lie on the Cytoplasmic side of the membrane. The helical transmembrane segment at 546–571 (LGIGIHAFCIRVFAGIPAPIYFGALI) threads the bilayer. At 572 to 605 (DRTCLHWGTQKCGAPGACRMYDINSFRRIYLGMS) the chain is on the extracellular side. A helical transmembrane segment spans residues 606–623 (AALRGSSYLPAFVIVILT). The Cytoplasmic portion of the chain corresponds to 624-670 (RKFSLPGKINSSEMEIAEMKLTEKESQCTDVHRNPKFKNDGELKTKL).

Belongs to the organo anion transporter (TC 2.A.60) family. In terms of tissue distribution, all isoforms are detected in kidney, and many are kidney specific. Isoforms 2 and 13 are also detected in liver. Isoforms 4 and 9/K4 are ubiquitous, but isoform 9/K13 is kidney specific. Isoforms 5 and 14 are detected in all tissues tested, with the exception of pancreas and spleen. Isoforms 11 and 15 are detected in kidney, pancreas and testis. Isoform 7 is detected in kidney, liver, testis and spleen.

It localises to the cell membrane. In terms of biological role, mediates the Na(+)-independent transport of organic anions such as methotrexate, taurocholate, folate and prostaglandin E2. May contribute to renal secretion and/or reabsorption of hydrophobic anionic compounds. Mediates renal clearance of methotrexate from the blood. The sequence is that of Solute carrier organic anion transporter family member 1A3 (Slco1a3) from Rattus norvegicus (Rat).